The chain runs to 1402 residues: DNA-directed RNA polymerase subunit beta' (1402 aa).

Residues C73, C75, C88, and C91 each contribute to the Zn(2+) site. Mg(2+)-binding residues include D464, D466, and D468. Zn(2+) is bound by residues C812, C886, C893, and C896.

The protein belongs to the RNA polymerase beta' chain family. The RNAP catalytic core consists of 2 alpha, 1 beta, 1 beta' and 1 omega subunit. When a sigma factor is associated with the core the holoenzyme is formed, which can initiate transcription. Mg(2+) is required as a cofactor. The cofactor is Zn(2+).

The enzyme catalyses RNA(n) + a ribonucleoside 5'-triphosphate = RNA(n+1) + diphosphate. DNA-dependent RNA polymerase catalyzes the transcription of DNA into RNA using the four ribonucleoside triphosphates as substrates. In Rhodopseudomonas palustris (strain ATCC BAA-98 / CGA009), this protein is DNA-directed RNA polymerase subunit beta'.